A 628-amino-acid chain; its full sequence is Biosynthetic arginine decarboxylase (628 aa).

N6-(pyridoxal phosphate)lysine is present on Lys99. 279–289 (VDVGGGLGIDY) is a substrate binding site.

This sequence belongs to the Orn/Lys/Arg decarboxylase class-II family. SpeA subfamily. Requires Mg(2+) as cofactor. It depends on pyridoxal 5'-phosphate as a cofactor.

It catalyses the reaction L-arginine + H(+) = agmatine + CO2. Functionally, catalyzes the biosynthesis of agmatine from arginine. This is Biosynthetic arginine decarboxylase from Xylella fastidiosa (strain 9a5c).